A 234-amino-acid polypeptide reads, in one-letter code: Ubiquinone biosynthesis O-methyltransferase (234 aa).

S-adenosyl-L-methionine contacts are provided by Arg40, Gly59, Asp80, and Met123.

It belongs to the methyltransferase superfamily. UbiG/COQ3 family.

It carries out the reaction a 3-demethylubiquinol + S-adenosyl-L-methionine = a ubiquinol + S-adenosyl-L-homocysteine + H(+). The enzyme catalyses a 3-(all-trans-polyprenyl)benzene-1,2-diol + S-adenosyl-L-methionine = a 2-methoxy-6-(all-trans-polyprenyl)phenol + S-adenosyl-L-homocysteine + H(+). It participates in cofactor biosynthesis; ubiquinone biosynthesis. In terms of biological role, O-methyltransferase that catalyzes the 2 O-methylation steps in the ubiquinone biosynthetic pathway. The chain is Ubiquinone biosynthesis O-methyltransferase from Coxiella burnetii (strain Dugway 5J108-111).